The sequence spans 652 residues: Putative glycine--tRNA ligase (652 aa).

A disordered region spans residues 119–145 (GDKEARGQNSNDQPEESDDKKKRKKKV). Glu221 contributes to the glycine binding site. Residues 253 to 255 (RNE) and 264 to 265 (RV) contribute to the ATP site. Glu272 lines the glycine pocket. 380–381 (EC) serves as a coordination point for ATP. Position 499 to 501 (499 to 501 (EPS)) interacts with glycine. Arg506 lines the ATP pocket.

This sequence belongs to the class-II aminoacyl-tRNA synthetase family. As to quaternary structure, homodimer.

It localises to the cytoplasm. The catalysed reaction is tRNA(Gly) + glycine + ATP = glycyl-tRNA(Gly) + AMP + diphosphate. It carries out the reaction 2 ATP + H(+) = P(1),P(4)-bis(5'-adenosyl) tetraphosphate + diphosphate. In terms of biological role, catalyzes the ATP-dependent ligation of glycine to the 3'-end of its cognate tRNA, via the formation of an aminoacyl-adenylate intermediate (Gly-AMP). Also produces diadenosine tetraphosphate (Ap4A), a universal pleiotropic signaling molecule needed for cell regulation pathways, by direct condensation of 2 ATPs. Thereby, may play a special role in Ap4A homeostasis. This chain is Putative glycine--tRNA ligase (grs1), found in Schizosaccharomyces pombe (strain 972 / ATCC 24843) (Fission yeast).